Reading from the N-terminus, the 106-residue chain is Protein S40-3 (106 aa).

Residues 1-65 (MSEEFQESEV…TEEEGEMTPP (65 aa)) are disordered. The span at 16–41 (SFTRKDNKISHNNENYERKSTEKDKI) shows a compositional bias: basic and acidic residues.

It belongs to the senescence regulator S40 family.

It is found in the nucleus. In terms of biological role, regulates senescence either by modulating WRKY53 or by activating SAG12. Affects the natural variation of cyst nematodes sex ratio and susceptibility to parasitic nematodes, depending on single nucleotide polymorphism (SNPs) between cultivars. The sequence is that of Protein S40-3 from Arabidopsis thaliana (Mouse-ear cress).